Reading from the N-terminus, the 111-residue chain is Probable 4-amino-4-deoxy-L-arabinose-phosphoundecaprenol flippase subunit ArnE (111 aa).

Residues 1–37 are Cytoplasmic-facing; it reads MIWLVLILASLLSVTGQLCQKQATRPVAINKRRKHIA. Residues 38 to 58 form a helical membrane-spanning segment; that stretch reads LWLGLGLVCLGLAMVLWLLVL. The EamA domain maps to 40–109; that stretch reads LGLGLVCLGL…IIGGIVILGS (70 aa). Residues 59 to 60 are Periplasmic-facing; sequence QT. A helical transmembrane segment spans residues 61–81; sequence VPVGIAYPMLSLNFVWVTLAA. The Cytoplasmic portion of the chain corresponds to 82–87; it reads TKLWHE. Residues 88-108 form a helical membrane-spanning segment; sequence PVSFRHWCGVAFIIGGIVILG. The Periplasmic segment spans residues 109 to 111; the sequence is STV.

This sequence belongs to the ArnE family. Heterodimer of ArnE and ArnF.

It is found in the cell inner membrane. The protein operates within bacterial outer membrane biogenesis; lipopolysaccharide biosynthesis. Its function is as follows. Translocates 4-amino-4-deoxy-L-arabinose-phosphoundecaprenol (alpha-L-Ara4N-phosphoundecaprenol) from the cytoplasmic to the periplasmic side of the inner membrane. This is Probable 4-amino-4-deoxy-L-arabinose-phosphoundecaprenol flippase subunit ArnE from Escherichia fergusonii (strain ATCC 35469 / DSM 13698 / CCUG 18766 / IAM 14443 / JCM 21226 / LMG 7866 / NBRC 102419 / NCTC 12128 / CDC 0568-73).